The primary structure comprises 277 residues: Bis(5'-nucleosyl)-tetraphosphatase, symmetrical (277 aa).

Belongs to the Ap4A hydrolase family.

The catalysed reaction is P(1),P(4)-bis(5'-adenosyl) tetraphosphate + H2O = 2 ADP + 2 H(+). Hydrolyzes diadenosine 5',5'''-P1,P4-tetraphosphate to yield ADP. The polypeptide is Bis(5'-nucleosyl)-tetraphosphatase, symmetrical (Azotobacter vinelandii (strain DJ / ATCC BAA-1303)).